The following is a 589-amino-acid chain: Aspartate--tRNA ligase (589 aa).

Position 176 (Glu176) interacts with L-aspartate. Residues 200 to 203 (QLFK) are aspartate. L-aspartate is bound at residue Arg222. ATP is bound by residues 222-224 (RDE) and Gln231. Residue His449 participates in L-aspartate binding. Glu483 provides a ligand contact to ATP. Arg490 contributes to the L-aspartate binding site. 535-538 (GLDR) lines the ATP pocket.

This sequence belongs to the class-II aminoacyl-tRNA synthetase family. Type 1 subfamily. In terms of assembly, homodimer.

The protein resides in the cytoplasm. The enzyme catalyses tRNA(Asp) + L-aspartate + ATP = L-aspartyl-tRNA(Asp) + AMP + diphosphate. In terms of biological role, catalyzes the attachment of L-aspartate to tRNA(Asp) in a two-step reaction: L-aspartate is first activated by ATP to form Asp-AMP and then transferred to the acceptor end of tRNA(Asp). The protein is Aspartate--tRNA ligase of Enterococcus faecalis (strain ATCC 700802 / V583).